The primary structure comprises 136 residues: Acyl-CoA thioesterase YbgC (136 aa).

The active site involves Asp-18.

It belongs to the 4-hydroxybenzoyl-CoA thioesterase family.

Functionally, displays acyl-CoA thioesterase activity with short chain aliphatic acyl-CoA thioesters, such as propionyl-CoA and butyryl-CoA. Enzyme activity is relatively low, suggesting that the acyl-CoA thioesters used in the assays are not the physiological substrates. Has no detectable activity with 4-hydroxybenzoyl-CoA, lauroyl-CoA (C12:0), arachidoyl-CoA (C20:0) and arachidonoyl-CoA (C20:4). The polypeptide is Acyl-CoA thioesterase YbgC (ybgC) (Haemophilus influenzae (strain ATCC 51907 / DSM 11121 / KW20 / Rd)).